The following is a 468-amino-acid chain: 6-phospho-beta-galactosidase (468 aa).

D-galactose 6-phosphate is bound by residues Q19, H116, N159, E160, and N297. E160 serves as the catalytic Proton donor. The active-site Nucleophile is E375. 4 residues coordinate D-galactose 6-phosphate: S428, W429, K435, and Y437.

It belongs to the glycosyl hydrolase 1 family.

The enzyme catalyses a 6-phospho-beta-D-galactoside + H2O = D-galactose 6-phosphate + an alcohol. It functions in the pathway carbohydrate metabolism; lactose degradation; D-galactose 6-phosphate and beta-D-glucose from lactose 6-phosphate: step 1/1. This is 6-phospho-beta-galactosidase from Streptococcus pyogenes serotype M28 (strain MGAS6180).